A 140-amino-acid polypeptide reads, in one-letter code: ATP synthase epsilon chain (140 aa).

It belongs to the ATPase epsilon chain family. F-type ATPases have 2 components, CF(1) - the catalytic core - and CF(0) - the membrane proton channel. CF(1) has five subunits: alpha(3), beta(3), gamma(1), delta(1), epsilon(1). CF(0) has three main subunits: a, b and c.

It is found in the cell inner membrane. Its function is as follows. Produces ATP from ADP in the presence of a proton gradient across the membrane. The sequence is that of ATP synthase epsilon chain from Neisseria meningitidis serogroup C / serotype 2a (strain ATCC 700532 / DSM 15464 / FAM18).